Consider the following 585-residue polypeptide: Arginine--tRNA ligase (585 aa).

The 'HIGH' region signature appears at 131–141 (ANPTGPMHVGH).

Belongs to the class-I aminoacyl-tRNA synthetase family. As to quaternary structure, monomer.

It localises to the cytoplasm. The catalysed reaction is tRNA(Arg) + L-arginine + ATP = L-arginyl-tRNA(Arg) + AMP + diphosphate. The polypeptide is Arginine--tRNA ligase (Chelativorans sp. (strain BNC1)).